A 226-amino-acid chain; its full sequence is 2-C-methyl-D-erythritol 4-phosphate cytidylyltransferase (226 aa).

Belongs to the IspD/TarI cytidylyltransferase family. IspD subfamily.

It catalyses the reaction 2-C-methyl-D-erythritol 4-phosphate + CTP + H(+) = 4-CDP-2-C-methyl-D-erythritol + diphosphate. The protein operates within isoprenoid biosynthesis; isopentenyl diphosphate biosynthesis via DXP pathway; isopentenyl diphosphate from 1-deoxy-D-xylulose 5-phosphate: step 2/6. Catalyzes the formation of 4-diphosphocytidyl-2-C-methyl-D-erythritol from CTP and 2-C-methyl-D-erythritol 4-phosphate (MEP). This chain is 2-C-methyl-D-erythritol 4-phosphate cytidylyltransferase, found in Rhodococcus opacus (strain B4).